Consider the following 38-residue polypeptide: Potassium channel toxin alpha-KTx 3.12 (38 aa).

Cystine bridges form between C8–C28, C14–C33, and C18–C35. A Lysine amide modification is found at K38.

It belongs to the short scorpion toxin superfamily. Potassium channel inhibitor family. Alpha-KTx 03 subfamily. In terms of tissue distribution, expressed by the venom gland.

The protein localises to the secreted. Functionally, potent inhibitor of voltage-dependent potassium channels, with a preference for Kv1.3/KCNA3 versus Kv1.2/KCNA2. The chain is Potassium channel toxin alpha-KTx 3.12 from Androctonus amoreuxi (African fattail scorpion).